Consider the following 257-residue polypeptide: uncharacterized protein (257 aa).

Residue serine 127 is modified to Phosphoserine. Disordered regions lie at residues 146-174 (HEDPKPSSTYNSSISAPPEDFKQDGEDDG) and 210-231 (AREKATELKQRRQEQATNRREK). The segment covering 151 to 160 (PSSTYNSSIS) has biased composition (polar residues). Positions 196 to 257 (HVRMVREVHE…QQQQEDEQKT (62 aa)) form a coiled coil.

This is an uncharacterized protein from Arabidopsis thaliana (Mouse-ear cress).